The following is a 482-amino-acid chain: UDP-N-acetylmuramate--L-alanine ligase (482 aa).

Residue 123-129 (GTHGKTT) participates in ATP binding.

It belongs to the MurCDEF family.

It localises to the cytoplasm. It carries out the reaction UDP-N-acetyl-alpha-D-muramate + L-alanine + ATP = UDP-N-acetyl-alpha-D-muramoyl-L-alanine + ADP + phosphate + H(+). It functions in the pathway cell wall biogenesis; peptidoglycan biosynthesis. Cell wall formation. In Pseudomonas entomophila (strain L48), this protein is UDP-N-acetylmuramate--L-alanine ligase.